Consider the following 96-residue polypeptide: Co-chaperonin GroES (96 aa).

This sequence belongs to the GroES chaperonin family. As to quaternary structure, heptamer of 7 subunits arranged in a ring. Interacts with the chaperonin GroEL.

It localises to the cytoplasm. Its function is as follows. Together with the chaperonin GroEL, plays an essential role in assisting protein folding. The GroEL-GroES system forms a nano-cage that allows encapsulation of the non-native substrate proteins and provides a physical environment optimized to promote and accelerate protein folding. GroES binds to the apical surface of the GroEL ring, thereby capping the opening of the GroEL channel. The sequence is that of Co-chaperonin GroES from Trichlorobacter lovleyi (strain ATCC BAA-1151 / DSM 17278 / SZ) (Geobacter lovleyi).